Consider the following 483-residue polypeptide: MPTLMVQGTTSDAGKSTLVTALCRWARRQGVSVAPFKPQNMALNSAVTADGGEIGRAQAVQAQAAGLAPHTDMNPVLLKPNSDMGAQVIIHGRAIGNMQALTYHGYKPVAMAAVLESHARLVERHQLVLVEGAGSPAEINLRAGDIANMGFAEAVDCPVILIADIDKGGVFAHLVGTLELLSPSEQARIRGFVINRFRGDIALLKPGLDWLEQRTGKPVLGVLPYLTDFHLEAEDAVDTRQQAKSAQALRVVVPVLPRISNHTDFDPLRLHPQVQLTFVGPGQAIPPADLIILPGSKSVRADLARLREQGWDTAIARHLRYGGKLLGICGGLQMLGRQIHDPHGLEGAAGSSEGLGLLDFETVLEPEKQLRNVRGQLCLEQAQVSGYEIHAGVSRGPGLNGAVQLDDGRSDGGLSADGQVLGTYLHGLFEQPSAFAALLRWAGLHEVQTVDYQALRERDIERLADQVELHLDNEQLRMLCGIR.

In terms of domain architecture, GATase cobBQ-type spans 248–434 (ALRVVVPVLP…LHGLFEQPSA (187 aa)). Cys-329 functions as the Nucleophile in the catalytic mechanism. His-426 is an active-site residue.

The protein belongs to the CobB/CobQ family. CobQ subfamily.

The protein operates within cofactor biosynthesis; adenosylcobalamin biosynthesis. Functionally, catalyzes amidations at positions B, D, E, and G on adenosylcobyrinic A,C-diamide. NH(2) groups are provided by glutamine, and one molecule of ATP is hydrogenolyzed for each amidation. The sequence is that of Cobyric acid synthase from Ectopseudomonas mendocina (strain ymp) (Pseudomonas mendocina).